Here is a 540-residue protein sequence, read N- to C-terminus: Cytochrome P450 monooxygenase ptmG (540 aa).

N-linked (GlcNAc...) asparagine glycosylation is present at N17. The next 2 helical transmembrane spans lie at 20 to 40 (VMTL…YICI) and 325 to 345 (AAFL…FLLL). Position 474 (C474) interacts with heme.

It belongs to the cytochrome P450 family. Heme is required as a cofactor.

Its subcellular location is the membrane. The protein operates within secondary metabolite biosynthesis. Functionally, cytochrome P450 monooxygenase; part of the gene cluster that mediates the biosynthesis of the indole diterpenes penitrems. The geranylgeranyl diphosphate (GGPP) synthase ptmG catalyzes the first step in penitrem biosynthesis via conversion of farnesyl pyrophosphate and isopentyl pyrophosphate into geranylgeranyl pyrophosphate (GGPP). Condensation of indole-3-glycerol phosphate with GGPP by the prenyl transferase ptmC then forms 3-geranylgeranylindole (3-GGI). Epoxidation by the FAD-dependent monooxygenase ptmM leads to a epoxidized-GGI that is substrate of the terpene cyclase ptmB for cyclization to yield paspaline. Paspaline is subsequently converted to 13-desoxypaxilline by the cytochrome P450 monooxygenase ptmP, the latter being then converted to paxilline by the cytochrome P450 monooxygenase ptmQ. Paxilline is converted to beta-paxitriol via C-10 ketoreduction by the short-chain dehydrogenase ptmH which can be monoprenylated at the C-20 by the indole diterpene prenyltransferase ptmD. A two-step elimination (acetylation and elimination) process performed by the O-acetyltransferase ptmV and ptmI leads to the production of the prenylated form of penijanthine. The FAD-linked oxidoreductase ptmO then converts the prenylated form of penijanthine into PC-M5 which is in turn transformed into PC-M4 by the aromatic dimethylallyltransferase ptmE. Five sequential oxidative transformations performed by the cytochrome P450 monooxygenases ptmK, ptmU, ptmL, ptmN and ptmJ yield the various penitrem compounds. PtmK, ptmU and ptmM are involved in the formation of the key bicyclic ring of penitrem C via the formation of the intermediates secopenitrem D and penitrem D. PtmL catalyzes the epoxidation of penitrem D and C to yield penitrem B and F, respectively. PtmJ catalyzes the last benzylic hydroxylation to convert penitrem B to prenitrem E and penitrem F to penitrem A. The chain is Cytochrome P450 monooxygenase ptmG from Penicillium ochrochloron.